The chain runs to 235 residues: Large ribosomal subunit protein uL1 (235 aa).

This sequence belongs to the universal ribosomal protein uL1 family. As to quaternary structure, part of the 50S ribosomal subunit.

In terms of biological role, binds directly to 23S rRNA. The L1 stalk is quite mobile in the ribosome, and is involved in E site tRNA release. Its function is as follows. Protein L1 is also a translational repressor protein, it controls the translation of the L11 operon by binding to its mRNA. The polypeptide is Large ribosomal subunit protein uL1 (Prochlorococcus marinus subsp. pastoris (strain CCMP1986 / NIES-2087 / MED4)).